The chain runs to 1325 residues: Protein PHYTOCHROME-DEPENDENT LATE-FLOWERING (1325 aa).

Composition is skewed to polar residues over residues 313–331 and 504–515; these read IGST…SVSG and NFPQTSWNVNPG. Disordered regions lie at residues 313 to 371, 462 to 558, 593 to 616, 852 to 875, and 1160 to 1325; these read IGST…MPGL, EPFE…EFSG, ANEA…NSLP, VAGQ…NSTQ, and QQQQ…GNNS. A compositionally biased stretch (basic and acidic residues) spans 518–529; that stretch reads IEKEPKKEEQFS. The span at 596–607 shows a compositional bias: low complexity; sequence AMQQRQHQAQMA. Residues 863-875 are compositionally biased toward polar residues; the sequence is HGNTGNTPNNSTQ. The span at 1160–1224 shows a compositional bias: low complexity; sequence QQQQQQQLQQ…QQQATASPLQ (65 aa). Positions 1225–1239 are enriched in polar residues; it reads SVLSPPQVGSPSAGI. Residues 1240 to 1262 show a composition bias toward low complexity; it reads TQQQLQQSSPQQMSQRTPMSPQQ. 2 stretches are compositionally biased toward polar residues: residues 1263–1286 and 1293–1325; these read VNQR…TSNL and PQLS…GNNS.

In terms of assembly, component of a red light-dependent nuclear complex made of PHL, PHYB and CO. Interacts directly with PHYB and CO; CO binding requires the presence of PHYB. Mostly expressed in cotyledons and leaves, both in mesophyll and vasculature cells. Also present in roots, hypocotyls and shoot apices.

Its subcellular location is the nucleus. It is found in the nuclear body. The protein localises to the cytoplasmic granule. The protein resides in the cytoplasm. Its function is as follows. Triggers photoperiod-monitored flowering by repressing PHYB-dependent flowering negative regulation, probably through physical interactions with PHYB and CO. The sequence is that of Protein PHYTOCHROME-DEPENDENT LATE-FLOWERING from Arabidopsis thaliana (Mouse-ear cress).